Consider the following 190-residue polypeptide: ATP synthase subunit delta (190 aa).

The protein belongs to the ATPase delta chain family. As to quaternary structure, F-type ATPases have 2 components, F(1) - the catalytic core - and F(0) - the membrane proton channel. F(1) has five subunits: alpha(3), beta(3), gamma(1), delta(1), epsilon(1). F(0) has three main subunits: a(1), b(2) and c(10-14). The alpha and beta chains form an alternating ring which encloses part of the gamma chain. F(1) is attached to F(0) by a central stalk formed by the gamma and epsilon chains, while a peripheral stalk is formed by the delta and b chains.

It localises to the cell inner membrane. In terms of biological role, f(1)F(0) ATP synthase produces ATP from ADP in the presence of a proton or sodium gradient. F-type ATPases consist of two structural domains, F(1) containing the extramembraneous catalytic core and F(0) containing the membrane proton channel, linked together by a central stalk and a peripheral stalk. During catalysis, ATP synthesis in the catalytic domain of F(1) is coupled via a rotary mechanism of the central stalk subunits to proton translocation. Functionally, this protein is part of the stalk that links CF(0) to CF(1). It either transmits conformational changes from CF(0) to CF(1) or is implicated in proton conduction. The polypeptide is ATP synthase subunit delta (Methylobacterium nodulans (strain LMG 21967 / CNCM I-2342 / ORS 2060)).